The primary structure comprises 224 residues: Ribonuclease 3 (224 aa).

The RNase III domain occupies 4-127 (IEKLEQSLTY…IIGAIHLEAG (124 aa)). Glutamate 40 is a Mg(2+) binding site. The active site involves aspartate 44. 2 residues coordinate Mg(2+): aspartate 113 and glutamate 116. The active site involves glutamate 116. Residues 154-223 (DYKTKLQEIT…AKIALEKLGA (70 aa)) enclose the DRBM domain.

This sequence belongs to the ribonuclease III family. Homodimer. It depends on Mg(2+) as a cofactor.

Its subcellular location is the cytoplasm. It catalyses the reaction Endonucleolytic cleavage to 5'-phosphomonoester.. In terms of biological role, digests double-stranded RNA. Involved in the processing of primary rRNA transcript to yield the immediate precursors to the large and small rRNAs (23S and 16S). Also processes some mRNAs, and tRNAs when they are encoded in the rRNA operon. CRISPR (clustered regularly interspaced short palindromic repeat) is an adaptive immune system that provides protection against mobile genetic elements (viruses, transposable elements and conjugative plasmids). CRISPR clusters contain spacers, sequences complementary to antecedent mobile elements, and target invading nucleic acids. CRISPR clusters are transcribed and processed into CRISPR RNA (crRNA). In this organism endogenous ribonuclease 3 and Cas9 are required for correct coprocessing of pre-crRNA and the trans-encoded small RNA (tracrRNA). Cas9, crRNA and tracrRNA are required for cleavage of invading DNA. Complements pre-crRNA and tracrRNA coprocessing defects in an rnc deletion in S.pyogenes strain 370. The polypeptide is Ribonuclease 3 (Campylobacter jejuni subsp. jejuni serotype O:2 (strain ATCC 700819 / NCTC 11168)).